The primary structure comprises 501 residues: Probable cytosol aminopeptidase (501 aa).

Positions 268 and 273 each coordinate Mn(2+). Lysine 280 is a catalytic residue. Residues aspartate 291, aspartate 350, and glutamate 352 each contribute to the Mn(2+) site. The active site involves arginine 354.

The protein belongs to the peptidase M17 family. The cofactor is Mn(2+).

Its subcellular location is the cytoplasm. The enzyme catalyses Release of an N-terminal amino acid, Xaa-|-Yaa-, in which Xaa is preferably Leu, but may be other amino acids including Pro although not Arg or Lys, and Yaa may be Pro. Amino acid amides and methyl esters are also readily hydrolyzed, but rates on arylamides are exceedingly low.. It catalyses the reaction Release of an N-terminal amino acid, preferentially leucine, but not glutamic or aspartic acids.. In terms of biological role, presumably involved in the processing and regular turnover of intracellular proteins. Catalyzes the removal of unsubstituted N-terminal amino acids from various peptides. The polypeptide is Probable cytosol aminopeptidase (Pseudoalteromonas atlantica (strain T6c / ATCC BAA-1087)).